A 414-amino-acid polypeptide reads, in one-letter code: 3-phosphoshikimate 1-carboxyvinyltransferase (414 aa).

Lys20, Ser21, and Arg25 together coordinate 3-phosphoshikimate. Lys20 contacts phosphoenolpyruvate. Phosphoenolpyruvate is bound at residue Arg113. Residues Ser154, Ser155, Gln156, Ser181, Asp296, and Lys323 each coordinate 3-phosphoshikimate. Residue Gln156 coordinates phosphoenolpyruvate. The active-site Proton acceptor is the Asp296. Phosphoenolpyruvate is bound by residues Arg327, Arg371, and Lys395.

Belongs to the EPSP synthase family. In terms of assembly, monomer.

The protein resides in the cytoplasm. The catalysed reaction is 3-phosphoshikimate + phosphoenolpyruvate = 5-O-(1-carboxyvinyl)-3-phosphoshikimate + phosphate. It functions in the pathway metabolic intermediate biosynthesis; chorismate biosynthesis. Catalyzes the transfer of the enolpyruvyl moiety of phosphoenolpyruvate (PEP) to the 5-hydroxyl of shikimate-3-phosphate (S3P) to produce enolpyruvyl shikimate-3-phosphate and inorganic phosphate. This Saccharolobus solfataricus (strain ATCC 35092 / DSM 1617 / JCM 11322 / P2) (Sulfolobus solfataricus) protein is 3-phosphoshikimate 1-carboxyvinyltransferase.